A 466-amino-acid polypeptide reads, in one-letter code: Chromosomal replication initiator protein DnaA (466 aa).

The domain I, interacts with DnaA modulators stretch occupies residues 1–86 (MSLSLWQQCL…EVGTKPVTQT (86 aa)). The tract at residues 86-129 (TLKTPVHNVVAPAQTTTAQPQRVAPAARSGWDNVPAPAEPTYRS) is domain II. The interval 130–346 (NVNVKHTFDN…GALNRVIANA (217 aa)) is domain III, AAA+ region. Residues Gly174, Gly176, Lys177, and Thr178 each coordinate ATP. The domain IV, binds dsDNA stretch occupies residues 347–466 (NFTGRAITID…FSNLIRTLSS (120 aa)).

Belongs to the DnaA family. Oligomerizes as a right-handed, spiral filament on DNA at oriC.

It is found in the cytoplasm. Functionally, plays an essential role in the initiation and regulation of chromosomal replication. ATP-DnaA binds to the origin of replication (oriC) to initiate formation of the DNA replication initiation complex once per cell cycle. Binds the DnaA box (a 9 base pair repeat at the origin) and separates the double-stranded (ds)DNA. Forms a right-handed helical filament on oriC DNA; dsDNA binds to the exterior of the filament while single-stranded (ss)DNA is stabiized in the filament's interior. The ATP-DnaA-oriC complex binds and stabilizes one strand of the AT-rich DNA unwinding element (DUE), permitting loading of DNA polymerase. After initiation quickly degrades to an ADP-DnaA complex that is not apt for DNA replication. Binds acidic phospholipids. This chain is Chromosomal replication initiator protein DnaA, found in Salmonella agona (strain SL483).